Reading from the N-terminus, the 86-residue chain is Large ribosomal subunit protein bL27 (86 aa).

Positions 1 to 10 (MAQKKGGGST) are enriched in gly residues. Residues 1 to 21 (MAQKKGGGSTRNGRDSESKRL) are disordered.

It belongs to the bacterial ribosomal protein bL27 family.

The sequence is that of Large ribosomal subunit protein bL27 from Cupriavidus necator (strain ATCC 17699 / DSM 428 / KCTC 22496 / NCIMB 10442 / H16 / Stanier 337) (Ralstonia eutropha).